Here is a 349-residue protein sequence, read N- to C-terminus: Protein RecA (349 aa).

71 to 75 is a binding site for phosphate; sequence SSGKT. ATP is bound by residues 71–76 and 102–105; these read SSGKTT and DPEY. Glutamine 196 lines the phosphate pocket.

This sequence belongs to the RecA family. In terms of assembly, polymerizes non-specifically on ssDNA to form filaments. Interacts with and activates LexA leading to autocatalytic cleavage of LexA, which derepresses the SOS regulon and activates DNA repair.

Its subcellular location is the cytoplasm. Functionally, required for homologous recombination (HR) and the bypass of mutagenic DNA lesions (double strand breaks, DSB) by the SOS response. Can catalyze the hydrolysis of ATP in the presence of single-stranded DNA, the ATP-dependent uptake of single-stranded DNA by duplex DNA, and the ATP-dependent hybridization of homologous single-stranded DNAs. Numerous X-ray crystals have been resolved under different conditions which indicate the flexibility of the protein, essential to its function. Gln-196 contributes to this plasticity by acting as a switch residue, which transmits the effect of nucleotide binding to the DNA-binding region. The sequence is that of Protein RecA from Mycolicibacterium smegmatis (strain ATCC 700084 / mc(2)155) (Mycobacterium smegmatis).